The chain runs to 128 residues: Large ribosomal subunit protein bL12 (128 aa).

The protein belongs to the bacterial ribosomal protein bL12 family. As to quaternary structure, homodimer. Part of the ribosomal stalk of the 50S ribosomal subunit. Forms a multimeric L10(L12)X complex, where L10 forms an elongated spine to which 2 to 4 L12 dimers bind in a sequential fashion. Binds GTP-bound translation factors.

In terms of biological role, forms part of the ribosomal stalk which helps the ribosome interact with GTP-bound translation factors. Is thus essential for accurate translation. The chain is Large ribosomal subunit protein bL12 from Rubrobacter xylanophilus (strain DSM 9941 / JCM 11954 / NBRC 16129 / PRD-1).